The sequence spans 137 residues: MLSPKKVKFRKRQKGRLKGKAQRGSSIAFGDIAIKTLEHGKLTNNQIEAARVAIMRHIKRGGQVWIRVFPDMPITAKPAEVRQGKGKGSPVGWVAPVKPGRILYEVKGVDIELAREALVRASHKLPVKTTIVVKEGL.

Residues 1 to 21 are compositionally biased toward basic residues; it reads MLSPKKVKFRKRQKGRLKGKA. The interval 1-22 is disordered; it reads MLSPKKVKFRKRQKGRLKGKAQ.

Belongs to the universal ribosomal protein uL16 family. In terms of assembly, part of the 50S ribosomal subunit.

In terms of biological role, binds 23S rRNA and is also seen to make contacts with the A and possibly P site tRNAs. The chain is Large ribosomal subunit protein uL16 from Maridesulfovibrio salexigens (strain ATCC 14822 / DSM 2638 / NCIMB 8403 / VKM B-1763) (Desulfovibrio salexigens).